A 266-amino-acid polypeptide reads, in one-letter code: Glutamate racemase (266 aa).

Residues 9–10 (DS) and 41–42 (YG) contribute to the substrate site. Residue Cys73 is the Proton donor/acceptor of the active site. 74–75 (NS) contacts substrate. Cys183 (proton donor/acceptor) is an active-site residue. Position 184–185 (184–185 (TH)) interacts with substrate.

It belongs to the aspartate/glutamate racemases family.

The catalysed reaction is L-glutamate = D-glutamate. It functions in the pathway cell wall biogenesis; peptidoglycan biosynthesis. Functionally, provides the (R)-glutamate required for cell wall biosynthesis. The protein is Glutamate racemase of Shewanella halifaxensis (strain HAW-EB4).